The chain runs to 386 residues: 2,3-diketo-5-methylthiopentyl-1-phosphate enolase (386 aa).

Catalysis depends on Lys-85, which acts as the Proton acceptor. Residues Lys-131, Lys-157–Glu-160, His-248, Gly-316, and Gly-338–Thr-339 each bind substrate. Mg(2+)-binding residues include Lys-157, Asp-159, and Glu-160. Lys-157 carries the post-translational modification N6-carboxylysine.

The protein belongs to the RuBisCO large chain family. Type IV subfamily. Homodimer. Mg(2+) is required as a cofactor.

It catalyses the reaction 5-methylsulfanyl-2,3-dioxopentyl phosphate = 2-hydroxy-5-methylsulfanyl-3-oxopent-1-enyl phosphate. It functions in the pathway amino-acid biosynthesis; L-methionine biosynthesis via salvage pathway; L-methionine from S-methyl-5-thio-alpha-D-ribose 1-phosphate: step 3/6. Functionally, catalyzes the enolization of 2,3-diketo-5-methylthiopentyl-1-phosphate (DK-MTP-1-P) into 2-hydroxy-3-keto-5-methylthiopentenyl-1-phosphate (HK-MTPenyl-1-P). This chain is 2,3-diketo-5-methylthiopentyl-1-phosphate enolase, found in Microcystis aeruginosa (strain NIES-843 / IAM M-2473).